A 184-amino-acid chain; its full sequence is Myeloproliferative leukemia protein (184 aa).

Residues 26–30 (WSAWS) carry the WSXWS motif motif. A helical membrane pass occupies residues 44 to 64 (ITLVTALLLVLSLSALLGLLL). A Box 1 motif motif is present at residues 80-88 (LWPSLPDLH).

It belongs to the type I cytokine receptor family. Type 1 subfamily.

Its subcellular location is the membrane. In terms of biological role, truncated form of the receptor for thrombopoietin. The chain is Myeloproliferative leukemia protein (V-MPL) from Mus musculus (Mouse).